Reading from the N-terminus, the 365-residue chain is Alanine racemase (365 aa).

The Proton acceptor; specific for D-alanine role is filled by lysine 32. Position 32 is an N6-(pyridoxal phosphate)lysine (lysine 32). Residue arginine 128 participates in substrate binding. The active-site Proton acceptor; specific for L-alanine is the tyrosine 257. Substrate is bound at residue methionine 305.

The protein belongs to the alanine racemase family. Pyridoxal 5'-phosphate is required as a cofactor.

The catalysed reaction is L-alanine = D-alanine. Its pathway is amino-acid biosynthesis; D-alanine biosynthesis; D-alanine from L-alanine: step 1/1. In terms of biological role, catalyzes the interconversion of L-alanine and D-alanine. May also act on other amino acids. This Francisella tularensis subsp. holarctica (strain LVS) protein is Alanine racemase (alr).